Reading from the N-terminus, the 119-residue chain is Acidic phospholipase A2 CM-II (119 aa).

Ca(2+) is bound by residues Tyr25, Gly27, and Gly29. The active site involves His45. Asp46 provides a ligand contact to Ca(2+). Asp87 is an active-site residue.

The protein belongs to the phospholipase A2 family. Group II subfamily. D49 sub-subfamily. The cofactor is Ca(2+). Post-translationally, contains 6 disulfide bonds. In terms of tissue distribution, expressed by the venom gland.

The protein resides in the secreted. The enzyme catalyses a 1,2-diacyl-sn-glycero-3-phosphocholine + H2O = a 1-acyl-sn-glycero-3-phosphocholine + a fatty acid + H(+). Functionally, PLA2 catalyzes the calcium-dependent hydrolysis of the 2-acyl groups in 3-sn-phosphoglycerides. This Bitis nasicornis (Rhinoceros adder) protein is Acidic phospholipase A2 CM-II.